A 630-amino-acid polypeptide reads, in one-letter code: Elongation factor 4 (630 aa).

Residues M1–A22 are disordered. Positions A30–V211 constitute a tr-type G domain. Residues D42–T47 and N158–D161 contribute to the GTP site.

Belongs to the TRAFAC class translation factor GTPase superfamily. Classic translation factor GTPase family. LepA subfamily.

It localises to the cell membrane. The catalysed reaction is GTP + H2O = GDP + phosphate + H(+). In terms of biological role, required for accurate and efficient protein synthesis under certain stress conditions. May act as a fidelity factor of the translation reaction, by catalyzing a one-codon backward translocation of tRNAs on improperly translocated ribosomes. Back-translocation proceeds from a post-translocation (POST) complex to a pre-translocation (PRE) complex, thus giving elongation factor G a second chance to translocate the tRNAs correctly. Binds to ribosomes in a GTP-dependent manner. The protein is Elongation factor 4 of Rhodococcus jostii (strain RHA1).